Consider the following 398-residue polypeptide: 4-hydroxy-3-methylbut-2-en-1-yl diphosphate synthase (ferredoxin) (398 aa).

[4Fe-4S] cluster is bound by residues C306, C309, C340, and E347.

This sequence belongs to the IspG family. The cofactor is [4Fe-4S] cluster.

The catalysed reaction is (2E)-4-hydroxy-3-methylbut-2-enyl diphosphate + 2 oxidized [2Fe-2S]-[ferredoxin] + H2O = 2-C-methyl-D-erythritol 2,4-cyclic diphosphate + 2 reduced [2Fe-2S]-[ferredoxin] + H(+). Its pathway is isoprenoid biosynthesis; isopentenyl diphosphate biosynthesis via DXP pathway; isopentenyl diphosphate from 1-deoxy-D-xylulose 5-phosphate: step 5/6. Converts 2C-methyl-D-erythritol 2,4-cyclodiphosphate (ME-2,4cPP) into 1-hydroxy-2-methyl-2-(E)-butenyl 4-diphosphate. In Parasynechococcus marenigrum (strain WH8102), this protein is 4-hydroxy-3-methylbut-2-en-1-yl diphosphate synthase (ferredoxin).